An 881-amino-acid chain; its full sequence is MVHYNFLSLIIFACFFAVFVLLVRAQDQSGFVSIDCGIPEDSSYNDETTDIKYVSDAAFVESGTIHSIDPEFQTSSLEKQFQNVRSFPEGNRNCYDVKPPQGKGFKYLIRTRFMYGNYDNLGKAPDFDLYLGFNIWDSVTIDNATTIVTKEIIHTLRSDHVHVCLVDKNRGTPFLSALEIRLLKSNTYETPYDSLILFKRWDLGGLGALPVRYKDDVFDRIWIPLRFPKYTIFNASLTIDSNNNEGFQPARFVMNTATSPEDLSQDIIFSWEPKDPTWKYFVYMHFAEVVELPSNETREFKVLLNEKEINMSSFSPRYLYTDTLFVQNPVSGPKLEFRLQQTPRSTLPPIINAIETYRVNEFLQSPTDQQDVDAIMRIKSKYGVKKSWLGDPCAPVKYPWKDINCSYVDNESPRIISVNLSSSGLTGEIDAAFSNLTLLHILDLSNNSLTGKIPDFLGNLHNLTELNLEGNKLSGAIPVKLLERSNKKLILLRIDGNPDLCVSASCQISDEKTKKNVYIIPLVASVVGVLGLVLAIALFLLYKKRHRRGGSGGVRAGPLDTTKRYYKYSEVVKVTNNFERVLGQGGFGKVYHGVLNDDQVAVKILSESSAQGYKEFRAEVELLLRVHHKNLTALIGYCHEGKKMALIYEFMANGTLGDYLSGEKSYVLSWEERLQISLDAAQGLEYLHNGCKPPIVQRDVKPANILINEKLQAKIADFGLSRSVALDGNNQDTTAVAGTIGYLDPEYHLTQKLSEKSDIYSFGVVLLEVVSGQPVIARSRTTAENIHITDRVDLMLSTGDIRGIVDPKLGERFDAGSAWKITEVAMACASSSSKNRPTMSHVVAELKESVSRARAGGGSGASSVTDPAMTNFDSGMFPQAR.

The first 25 residues, 1 to 25, serve as a signal peptide directing secretion; the sequence is MVHYNFLSLIIFACFFAVFVLLVRA. The Extracellular segment spans residues 26–518; it reads QDQSGFVSID…SDEKTKKNVY (493 aa). Residues asparagine 143, asparagine 234, asparagine 295, asparagine 310, asparagine 404, asparagine 419, asparagine 435, asparagine 446, and asparagine 462 are each glycosylated (N-linked (GlcNAc...) asparagine). LRR repeat units lie at residues 438–460 and 462–483; these read LLHI…LGNL and NLTE…KLLE. Residues 519–539 traverse the membrane as a helical segment; sequence IIPLVASVVGVLGLVLAIALF. The Cytoplasmic segment spans residues 540 to 881; the sequence is LLYKKRHRRG…FDSGMFPQAR (342 aa). A Protein kinase domain is found at 576–850; the sequence is NNFERVLGQG…HVVAELKESV (275 aa). Residues 582 to 590 and lysine 603 each bind ATP; that span reads LGQGGFGKV. The residue at position 648 (tyrosine 648) is a Phosphotyrosine. The Proton acceptor role is filled by aspartate 699. Phosphothreonine is present on residues threonine 734 and threonine 739. Tyrosine 747 is subject to Phosphotyrosine. Residues 851–881 are disordered; that stretch reads SRARAGGGSGASSVTDPAMTNFDSGMFPQAR.

This sequence belongs to the protein kinase superfamily. Ser/Thr protein kinase family.

The protein resides in the cell membrane. It carries out the reaction L-seryl-[protein] + ATP = O-phospho-L-seryl-[protein] + ADP + H(+). The catalysed reaction is L-threonyl-[protein] + ATP = O-phospho-L-threonyl-[protein] + ADP + H(+). This is Putative leucine-rich repeat receptor-like protein kinase At2g19210 from Arabidopsis thaliana (Mouse-ear cress).